The primary structure comprises 244 residues: Monothiol glutaredoxin-4 (244 aa).

A Thioredoxin domain is found at 2–106 (SVEITFVEQF…LKAAIDEYIQ (105 aa)). Residues 147–244 (NERLSTLTNA…NGELQEMLPN (98 aa)) enclose the Glutaredoxin domain. Position 164 (lysine 164) interacts with glutathione. Cysteine 172 serves as a coordination point for [2Fe-2S] cluster. Residues 201 to 205 (RQGLK) and 226 to 227 (LD) contribute to the glutathione site.

The protein belongs to the glutaredoxin family. Monothiol subfamily. In terms of assembly, homodimer. Interacts with php4.

It is found in the cytoplasm. It localises to the nucleus. Functionally, monothiol glutaredoxin involved in the biogenesis of iron-sulfur clusters. Binds one iron-sulfur cluster per dimer. The iron-sulfur cluster is bound between subunits, and is complexed by a bound glutathione and a cysteine residue from each subunit. The polypeptide is Monothiol glutaredoxin-4 (grx4) (Schizosaccharomyces pombe (strain 972 / ATCC 24843) (Fission yeast)).